Consider the following 1283-residue polypeptide: uncharacterized protein (1283 aa).

In terms of domain architecture, LDL-receptor class A spans 10–46 (ACPPNTFTCADGSCIPSDWKGDGEKDCEDGSDEEAVT). 2 disulfides stabilise this stretch: cysteine 11/cysteine 23 and cysteine 18/cysteine 36. The tract at residues 27 to 47 (DWKGDGEKDCEDGSDEEAVTG) is disordered. A compositionally biased stretch (acidic residues) spans 34–45 (KDCEDGSDEEAV). Asparagine 79 carries N-linked (GlcNAc...) asparagine glycosylation. Residues 236–278 (STTLIVDETTESTSASAEDDDDDVLTTNTSEESTATTAHDEEV) are disordered. Positions 261-272 (TTNTSEESTATT) are enriched in low complexity. Positions 332-389 (YQKTLEKEKCAIRNATSKCEALISYNNNLDCAIVTMNDECEVDAQNLVVELQEEVNDL) form a coiled coil. 2 disordered regions span residues 621-651 (ARPTPVTMPPRAPTAKPLPIPSAPTPPVASS) and 1005-1046 (SSST…PTDG). Pro residues predominate over residues 626 to 647 (VTMPPRAPTAKPLPIPSAPTPP). Residues 1005-1015 (SSSTMVSTSSE) show a composition bias toward low complexity. Positions 1016-1026 (SDSESAPEQET) are enriched in acidic residues. Over residues 1027-1044 (EPTVPSTTETTESPSTPT) the composition is skewed to low complexity. A helical transmembrane segment spans residues 1263 to 1283 (VQSSVSFHIILAALIPFFALF).

It localises to the membrane. This is an uncharacterized protein from Caenorhabditis elegans.